A 159-amino-acid chain; its full sequence is Urease accessory protein UreE (159 aa).

It belongs to the UreE family.

It is found in the cytoplasm. In terms of biological role, involved in urease metallocenter assembly. Binds nickel. Probably functions as a nickel donor during metallocenter assembly. The protein is Urease accessory protein UreE of Pseudomonas entomophila (strain L48).